Here is a 293-residue protein sequence, read N- to C-terminus: Aspartate carbamoyltransferase catalytic subunit (293 aa).

Positions 50 and 51 each coordinate carbamoyl phosphate. An L-aspartate-binding site is contributed by Lys-78. Positions 100, 127, and 130 each coordinate carbamoyl phosphate. 2 residues coordinate L-aspartate: Arg-160 and Arg-210. Residues Ala-253 and Pro-254 each coordinate carbamoyl phosphate.

The protein belongs to the aspartate/ornithine carbamoyltransferase superfamily. ATCase family. Heterododecamer (2C3:3R2) of six catalytic PyrB chains organized as two trimers (C3), and six regulatory PyrI chains organized as three dimers (R2).

It carries out the reaction carbamoyl phosphate + L-aspartate = N-carbamoyl-L-aspartate + phosphate + H(+). The protein operates within pyrimidine metabolism; UMP biosynthesis via de novo pathway; (S)-dihydroorotate from bicarbonate: step 2/3. In terms of biological role, catalyzes the condensation of carbamoyl phosphate and aspartate to form carbamoyl aspartate and inorganic phosphate, the committed step in the de novo pyrimidine nucleotide biosynthesis pathway. The protein is Aspartate carbamoyltransferase catalytic subunit of Staphylococcus epidermidis (strain ATCC 12228 / FDA PCI 1200).